We begin with the raw amino-acid sequence, 259 residues long: MSGMCLLIDAGNSRIKWALADTARHFVTSGAFEHASDAPDWSTLPAPRGAWISNVAGDAAAARIDALIEARWPALPRTVVRASAAQCGVTNGYAEPARLGSDRWAGLIGAHAAFADEHLLIATFGTATTLEALRADGHFAGGLIAPGWALMMRSLGMHTAQLPTVSIDAATNLLDELAENDAHAPFAIDTPHALSAGCLQAQAGLIERAWRDLEKAWQAPVRLVLSGGAADAIVRALTVPHTRHDTLVLTGLALIAHSA.

Asp9–Lys16 is a binding site for ATP. Residues Tyr93 and Gly100–Arg103 contribute to the substrate site. Catalysis depends on Asp102, which acts as the Proton acceptor. Thr126 serves as a coordination point for ATP. Position 190 (Thr190) interacts with substrate.

The protein belongs to the type III pantothenate kinase family. In terms of assembly, homodimer. The cofactor is NH4(+). It depends on K(+) as a cofactor.

Its subcellular location is the cytoplasm. It catalyses the reaction (R)-pantothenate + ATP = (R)-4'-phosphopantothenate + ADP + H(+). It functions in the pathway cofactor biosynthesis; coenzyme A biosynthesis; CoA from (R)-pantothenate: step 1/5. Functionally, catalyzes the phosphorylation of pantothenate (Pan), the first step in CoA biosynthesis. The protein is Type III pantothenate kinase of Burkholderia pseudomallei (strain K96243).